The following is an 862-amino-acid chain: Valine--tRNA ligase (862 aa).

Residues 44–53 (NVTGSLHMGH) carry the 'HIGH' region motif. 8 residues coordinate Zn(2+): C176, C179, C344, C347, C417, C420, C438, and C441. The 'KMSKS' region motif lies at 528 to 532 (KMSKS). K531 is a binding site for ATP. The stretch at 802–862 (RRRQEKRLKE…RIREALSQIG (61 aa)) forms a coiled coil.

This sequence belongs to the class-I aminoacyl-tRNA synthetase family. ValS type 1 subfamily. As to quaternary structure, monomer. It depends on Zn(2+) as a cofactor.

It is found in the cytoplasm. It catalyses the reaction tRNA(Val) + L-valine + ATP = L-valyl-tRNA(Val) + AMP + diphosphate. Functionally, catalyzes the attachment of valine to tRNA(Val). As ValRS can inadvertently accommodate and process structurally similar amino acids such as threonine, to avoid such errors, it has a 'posttransfer' editing activity that hydrolyzes mischarged Thr-tRNA(Val) in a tRNA-dependent manner. This is Valine--tRNA ligase from Thermus thermophilus (strain ATCC 27634 / DSM 579 / HB8).